The primary structure comprises 101 residues: Small ribosomal subunit protein uS14 (101 aa).

Belongs to the universal ribosomal protein uS14 family. As to quaternary structure, part of the 30S ribosomal subunit. Contacts proteins S3 and S10.

In terms of biological role, binds 16S rRNA, required for the assembly of 30S particles and may also be responsible for determining the conformation of the 16S rRNA at the A site. The polypeptide is Small ribosomal subunit protein uS14 (Polaromonas naphthalenivorans (strain CJ2)).